We begin with the raw amino-acid sequence, 255 residues long: ATP synthase subunit a (255 aa).

A propeptide spans 1 to 7 (MMFNNII) (removed in mature form). 6 consecutive transmembrane segments (helical) span residues 35–55 (FGFY…LITY), 91–111 (YFPF…LGLI), 120–140 (HFIL…ILGF), 147–167 (FFSL…LVLI), 177–197 (VSLG…LVIL), and 208–228 (GIFY…FSGL).

It belongs to the ATPase A chain family. In terms of assembly, F-type ATPases have 2 components, CF(1) - the catalytic core - and CF(0) - the membrane proton channel. CF(1) has five subunits: alpha(3), beta(3), gamma(1), delta(1), epsilon(1). CF(0) has three main subunits: a, b and c.

The protein resides in the mitochondrion inner membrane. Mitochondrial membrane ATP synthase (F(1)F(0) ATP synthase or Complex V) produces ATP from ADP in the presence of a proton gradient across the membrane which is generated by electron transport complexes of the respiratory chain. F-type ATPases consist of two structural domains, F(1) - containing the extramembraneous catalytic core and F(0) - containing the membrane proton channel, linked together by a central stalk and a peripheral stalk. During catalysis, ATP synthesis in the catalytic domain of F(1) is coupled via a rotary mechanism of the central stalk subunits to proton translocation. Key component of the proton channel; it may play a direct role in the translocation of protons across the membrane. In Trichophyton rubrum (Athlete's foot fungus), this protein is ATP synthase subunit a (ATP6).